The chain runs to 148 residues: Large ribosomal subunit protein bL9 (148 aa).

Belongs to the bacterial ribosomal protein bL9 family.

Binds to the 23S rRNA. The polypeptide is Large ribosomal subunit protein bL9 (Bacillus mycoides (strain KBAB4) (Bacillus weihenstephanensis)).